The sequence spans 430 residues: Lipoyl synthase, mitochondrial (430 aa).

The transit peptide at 1-37 directs the protein to the mitochondrion; that stretch reads MATSAGKLRTLYSAHSSLSSLPPSARPTLQLATLRSY. Polar residues predominate over residues 39 to 55; that stretch reads TTTPHDSPIGNTSNTPP. Residues 39 to 59 are disordered; that stretch reads TTTPHDSPIGNTSNTPPTVKR. [4Fe-4S] cluster is bound by residues C141, C146, C152, C172, C176, C179, and S387. Positions 155 to 376 constitute a Radical SAM core domain; the sequence is GSSKSAATAT…KERALEMGFL (222 aa).

This sequence belongs to the radical SAM superfamily. Lipoyl synthase family. The cofactor is [4Fe-4S] cluster.

The protein resides in the mitochondrion. The enzyme catalyses [[Fe-S] cluster scaffold protein carrying a second [4Fe-4S](2+) cluster] + N(6)-octanoyl-L-lysyl-[protein] + 2 oxidized [2Fe-2S]-[ferredoxin] + 2 S-adenosyl-L-methionine + 4 H(+) = [[Fe-S] cluster scaffold protein] + N(6)-[(R)-dihydrolipoyl]-L-lysyl-[protein] + 4 Fe(3+) + 2 hydrogen sulfide + 2 5'-deoxyadenosine + 2 L-methionine + 2 reduced [2Fe-2S]-[ferredoxin]. Its pathway is protein modification; protein lipoylation via endogenous pathway; protein N(6)-(lipoyl)lysine from octanoyl-[acyl-carrier-protein]: step 2/2. Its function is as follows. Catalyzes the radical-mediated insertion of two sulfur atoms into the C-6 and C-8 positions of the octanoyl moiety bound to the lipoyl domains of lipoate-dependent enzymes, thereby converting the octanoylated domains into lipoylated derivatives. The sequence is that of Lipoyl synthase, mitochondrial from Ajellomyces capsulatus (strain H143) (Darling's disease fungus).